The chain runs to 628 residues: Chaperone protein DnaK (628 aa).

A Phosphothreonine; by autocatalysis modification is found at T197. A disordered region spans residues 597 to 628 (EQMYKGEQGAQGGAADTSKKKSDDDVIDAEIE).

This sequence belongs to the heat shock protein 70 family.

In terms of biological role, acts as a chaperone. This Sulfurimonas denitrificans (strain ATCC 33889 / DSM 1251) (Thiomicrospira denitrificans (strain ATCC 33889 / DSM 1251)) protein is Chaperone protein DnaK.